A 1155-amino-acid polypeptide reads, in one-letter code: Pesticidal crystal protein Cry1Ab (1155 aa).

Belongs to the delta endotoxin family.

In terms of biological role, promotes colloidosmotic lysis by binding to the midgut epithelial cells of many lepidopteran larvae. The sequence is that of Pesticidal crystal protein Cry1Ab (cry1Ab) from Bacillus thuringiensis subsp. aizawai.